The primary structure comprises 346 residues: Methylthioribose-1-phosphate isomerase (346 aa).

Substrate-binding positions include 50 to 52 (RGA), R93, and Q196. Residue D237 is the Proton donor of the active site. 247–248 (NK) provides a ligand contact to substrate.

Belongs to the eIF-2B alpha/beta/delta subunits family. MtnA subfamily.

The enzyme catalyses 5-(methylsulfanyl)-alpha-D-ribose 1-phosphate = 5-(methylsulfanyl)-D-ribulose 1-phosphate. It functions in the pathway amino-acid biosynthesis; L-methionine biosynthesis via salvage pathway; L-methionine from S-methyl-5-thio-alpha-D-ribose 1-phosphate: step 1/6. In terms of biological role, catalyzes the interconversion of methylthioribose-1-phosphate (MTR-1-P) into methylthioribulose-1-phosphate (MTRu-1-P). This chain is Methylthioribose-1-phosphate isomerase, found in Alkalilimnicola ehrlichii (strain ATCC BAA-1101 / DSM 17681 / MLHE-1).